The primary structure comprises 365 residues: Peptide chain release factor 2 (365 aa).

Gln-252 carries the post-translational modification N5-methylglutamine.

It belongs to the prokaryotic/mitochondrial release factor family. In terms of processing, methylated by PrmC. Methylation increases the termination efficiency of RF2.

It localises to the cytoplasm. Functionally, peptide chain release factor 2 directs the termination of translation in response to the peptide chain termination codons UGA and UAA. The sequence is that of Peptide chain release factor 2 (prfB) from Haemophilus influenzae (strain ATCC 51907 / DSM 11121 / KW20 / Rd).